Reading from the N-terminus, the 156-residue chain is Ribosomal RNA large subunit methyltransferase H (156 aa).

S-adenosyl-L-methionine is bound by residues L73, G104, and 123-128 (LSKLTL).

The protein belongs to the RNA methyltransferase RlmH family. As to quaternary structure, homodimer.

It is found in the cytoplasm. It catalyses the reaction pseudouridine(1915) in 23S rRNA + S-adenosyl-L-methionine = N(3)-methylpseudouridine(1915) in 23S rRNA + S-adenosyl-L-homocysteine + H(+). In terms of biological role, specifically methylates the pseudouridine at position 1915 (m3Psi1915) in 23S rRNA. The protein is Ribosomal RNA large subunit methyltransferase H of Hydrogenovibrio crunogenus (strain DSM 25203 / XCL-2) (Thiomicrospira crunogena).